The following is a 525-amino-acid chain: GMP synthase [glutamine-hydrolyzing] (525 aa).

The region spanning Arg-9–Leu-207 is the Glutamine amidotransferase type-1 domain. The active-site Nucleophile is the Cys-86. Active-site residues include His-181 and Glu-183. In terms of domain architecture, GMPS ATP-PPase spans Trp-208–Arg-400. Residue Ser-235–Ser-241 participates in ATP binding.

As to quaternary structure, homodimer.

It catalyses the reaction XMP + L-glutamine + ATP + H2O = GMP + L-glutamate + AMP + diphosphate + 2 H(+). Its pathway is purine metabolism; GMP biosynthesis; GMP from XMP (L-Gln route): step 1/1. Its function is as follows. Catalyzes the synthesis of GMP from XMP. The polypeptide is GMP synthase [glutamine-hydrolyzing] (Pseudomonas aeruginosa (strain UCBPP-PA14)).